A 446-amino-acid polypeptide reads, in one-letter code: Probable cytosolic iron-sulfur protein assembly protein 1 (446 aa).

7 WD repeats span residues 17–59 (AFKP…AHSN), 63–106 (GHTR…PLEE), 143–182 (GHEN…EGDD), 192–241 (EHDG…EWAC), 247–291 (GHSS…PEAS), 330–368 (VHTR…NPST), and 398–446 (GHGP…SIEL). A compositionally biased stretch (basic and acidic residues) spans 106–128 (EGTKKGESTEIDVTRRRNNNDSD). A disordered region spans residues 106-133 (EGTKKGESTEIDVTRRRNNNDSDKDNDD).

Belongs to the WD repeat CIA1 family.

Its function is as follows. Essential component of the cytosolic iron-sulfur (Fe/S) protein assembly machinery. Required for the maturation of extramitochondrial Fe/S proteins. In Pyricularia oryzae (strain 70-15 / ATCC MYA-4617 / FGSC 8958) (Rice blast fungus), this protein is Probable cytosolic iron-sulfur protein assembly protein 1.